The primary structure comprises 62 residues: UPF0434 protein RHE_CH03977 (62 aa).

The protein belongs to the UPF0434 family.

The protein is UPF0434 protein RHE_CH03977 of Rhizobium etli (strain ATCC 51251 / DSM 11541 / JCM 21823 / NBRC 15573 / CFN 42).